The chain runs to 108 residues: MSPIQYDYHHLPHVKTQNQSKKTLWITLVLTLFFTIVEIVGGLLSNSLALLSDSAHMASDVLALGLSMIALYLAMRPPNHRFTFGYLRFEIITSFLNGLTLAIISIGI.

The next 3 helical transmembrane spans lie at Leu-24 to Leu-44, Ala-55 to Met-75, and Arg-88 to Ile-108.

This sequence to cation A.eutrophus efflux system protein CzcD.

It localises to the cell membrane. This is an uncharacterized protein from Geobacillus stearothermophilus (Bacillus stearothermophilus).